The chain runs to 168 residues: DAZ-associated protein 2 (168 aa).

Over residues 1 to 13 (MNSKGQYPTQPTY) the composition is skewed to low complexity. The disordered stretch occupies residues 1–25 (MNSKGQYPTQPTYPVQPPGNPVYPQ). The PPAY signature appears at 39–42 (PPAY). Residue S77 is modified to Phosphoserine.

As to quaternary structure, interacts with SOX6. Interacts with DAZ1 and DAZL. Interacts with IL17RB. May interact with FAM168B. Interacts with INCA1. Interacts with EIF4G1 and EIF4G2. Interacts (via PPAY motif) with NEDD4 (via WW domains). Interacts with transcription factor TCF4; the interaction results in localization of DAZAP2 to the nucleus. Interacts with transcription factors TCF7 and TCF7L1. Interacts with transcription factor LEF1. Interacts with serine/threonine-protein kinase HIPK2; the interaction results in phosphorylation of DAZAP2 which causes localization of DAZAP2 to the nucleus, reduces interaction of DAZAP2 with HIPK2 and prevents DAZAP2-dependent degradation of HIPK2. Interacts with ubiquitin ligase SIAH1; the interaction is decreased following phosphorylation of DAZAP2 by HIPK2. Interacts with TP53; the interaction is triggered by DNA damage. In terms of processing, ubiquitinated by SMURF2, leading to proteasomal degradation. Ubiquitinated by NEDD4, leading to proteasomal degradation. Following DNA damage, phosphorylated by HIPK2 which promotes DAZAP2 localization to the nucleus, reduces interaction of DAZAP2 with HIPK2 and SIAH1, and prevents DAZAP2-dependent ubiquitination of HIPK2 by E3 ubiquitin-protein ligase SIAH1 and subsequent HIPK2 proteasomal degradation.

The protein resides in the cytoplasm. The protein localises to the nucleus. Its subcellular location is the nucleus speckle. It localises to the nuclear body. It is found in the stress granule. Its function is as follows. In unstressed cells, promotes SIAH1-mediated polyubiquitination and degradation of the serine/threonine-protein kinase HIPK2, probably by acting as a loading factor that potentiates complex formation between HIPK2 and ubiquitin ligase SIAH1. In response to DNA damage, localizes to the nucleus following phosphorylation by HIPK2 and modulates the expression of a subset of TP53/p53 target genes by binding to TP53 at target gene promoters. This limits the expression of a number of cell death-mediating TP53 target genes, reducing DNA damage-induced cell death. Enhances the binding of transcription factor TCF7L2/TCF4, a Wnt signaling pathway effector, to the promoters of target genes. Plays a role in stress granule formation. In Macaca fascicularis (Crab-eating macaque), this protein is DAZ-associated protein 2.